Consider the following 329-residue polypeptide: Thiamine thiazole synthase (329 aa).

Substrate-binding positions include C86, 107–108, G115, and V180; that span reads EA. C218 carries the 2,3-didehydroalanine (Cys) modification. Residues D220, H235, M287, and 297–299 contribute to the substrate site; that span reads RMG.

It belongs to the THI4 family. As to quaternary structure, homooctamer. Requires Fe cation as cofactor. In terms of processing, during the catalytic reaction, a sulfide is transferred from Cys-218 to a reaction intermediate, generating a dehydroalanine residue.

It is found in the cytoplasm. The protein resides in the nucleus. The catalysed reaction is [ADP-thiazole synthase]-L-cysteine + glycine + NAD(+) = [ADP-thiazole synthase]-dehydroalanine + ADP-5-ethyl-4-methylthiazole-2-carboxylate + nicotinamide + 3 H2O + 2 H(+). Involved in biosynthesis of the thiamine precursor thiazole. Catalyzes the conversion of NAD and glycine to adenosine diphosphate 5-(2-hydroxyethyl)-4-methylthiazole-2-carboxylic acid (ADT), an adenylated thiazole intermediate. The reaction includes an iron-dependent sulfide transfer from a conserved cysteine residue of the protein to a thiazole intermediate. The enzyme can only undergo a single turnover, which suggests it is a suicide enzyme. May have additional roles in adaptation to various stress conditions and in DNA damage tolerance. The sequence is that of Thiamine thiazole synthase from Phaeosphaeria nodorum (strain SN15 / ATCC MYA-4574 / FGSC 10173) (Glume blotch fungus).